We begin with the raw amino-acid sequence, 293 residues long: Tumor necrosis factor receptor type 1-associated DEATH domain protein (293 aa).

The Nuclear export signal signature appears at 156-171 (LRDDEVTQLEQQLQNS). The Death domain occupies 200 to 290 (TPADQQRFAA…SMAEIMLGIQ (91 aa)). Residues 216–229 (KRVGRALQKNCRAL) carry the Nuclear localization signal motif.

In terms of assembly, heterodimer with tnfrsf1a.

It is found in the nucleus. The protein localises to the cytoplasm. Its subcellular location is the cytoskeleton. In terms of biological role, adapter molecule for tnfrsf1a that specifically associates with the cytoplasmic domain of activated tnfrsf1a mediating its interaction with fadd. The sequence is that of Tumor necrosis factor receptor type 1-associated DEATH domain protein from Danio rerio (Zebrafish).